An 86-amino-acid chain; its full sequence is Sugar transporter SemiSWEET (86 aa).

3 helical membrane-spanning segments follow: residues 3–23 (PFLIKLIGFAAATCTTVAYAP), 37–57 (ISLGMFLVMVLGLALWLIYGL), and 61–81 (DAPLIASNAVTMLLAGGILVM). The PQ-loop domain occupies 6-63 (IKLIGFAAATCTTVAYAPQFIKVLKTRSARDISLGMFLVMVLGLALWLIYGLLSGDAP).

As to quaternary structure, homodimer. Homooligomer.

Its subcellular location is the cell membrane. Its function is as follows. Mediates sucrose transmembrane transport down a concentration gradient. This chain is Sugar transporter SemiSWEET, found in Bradyrhizobium diazoefficiens (strain JCM 10833 / BCRC 13528 / IAM 13628 / NBRC 14792 / USDA 110).